The sequence spans 482 residues: Docking protein 1 (482 aa).

The residue at position 1 (Met-1) is an N-acetylmethionine. A PH domain is found at Ala-4 to Phe-119. Ser-48 bears the Phosphoserine mark. The region spanning Glu-151 to Gly-259 is the IRS-type PTB domain. Phosphoserine is present on residues Ser-269 and Ser-290. Residues Ser-269 to Gly-328 form a disordered region. 5 positions are modified to phosphotyrosine: Tyr-295, Tyr-336, Tyr-340, Tyr-361, and Tyr-376. The segment at Thr-353 to Arg-373 is disordered. Tyr-397 bears the Phosphotyrosine; by INSR mark. A disordered region spans residues Glu-398–Thr-482. At Tyr-408 the chain carries Phosphotyrosine. Residues Val-410–Lys-423 show a composition bias toward pro residues. Ser-415 is subject to Phosphoserine. Over residues Ser-432–Ser-459 the composition is skewed to polar residues. A Phosphotyrosine modification is found at Tyr-450.

This sequence belongs to the DOK family. Type A subfamily. As to quaternary structure, interacts with RasGAP, INPP5D/SHIP1 and ABL1. Interacts directly with phosphorylated ITGB3. Interacts with SRMS (via the SH2 and SH3 domains). Post-translationally, constitutively tyrosine-phosphorylated. Phosphorylated by TEC. Phosphorylated on tyrosine residues by the insulin receptor kinase. Results in the negative regulation of the insulin signaling pathway. Phosphorylated by LYN. Phosphorylated on tyrosine residues by SRMS. As to expression, expressed in lung, spleen, skeletal muscle and kidney.

It is found in the cytoplasm. It localises to the nucleus. Functionally, DOK proteins are enzymatically inert adaptor or scaffolding proteins. They provide a docking platform for the assembly of multimolecular signaling complexes. DOK1 appears to be a negative regulator of the insulin signaling pathway. Modulates integrin activation by competing with talin for the same binding site on ITGB3. The sequence is that of Docking protein 1 (Dok1) from Mus musculus (Mouse).